Reading from the N-terminus, the 106-residue chain is Photosystem II 5 kDa protein, chloroplastic (106 aa).

Residues 1–76 (MASITMMSSF…ACSVAKTAMA (76 aa)) constitute a chloroplast transit peptide. An intrachain disulfide couples Cys95 to Cys104.

Disulfide bond. In terms of tissue distribution, expressed in midvein, lamina and periphery of leaves (at protein level).

It localises to the plastid. Its subcellular location is the chloroplast thylakoid membrane. Its function is as follows. May be a component of the oxygen-evolving complex. The sequence is that of Photosystem II 5 kDa protein, chloroplastic from Petunia hybrida (Petunia).